We begin with the raw amino-acid sequence, 332 residues long: Ketol-acid reductoisomerase (NADP(+)) (332 aa).

Residues 3 to 183 (TEIFYDADAD…GGARAGVIKT (181 aa)) enclose the KARI N-terminal Rossmann domain. NADP(+)-binding positions include 26–29 (YGSQ), serine 52, serine 54, and 84–87 (DTKQ). Histidine 109 is an active-site residue. Residue glycine 135 participates in NADP(+) binding. The KARI C-terminal knotted domain occupies 184 to 329 (TFTEETETDL…KKLRSLMSWT (146 aa)). 4 residues coordinate Mg(2+): aspartate 192, glutamate 196, glutamate 228, and glutamate 232. Serine 253 contacts substrate.

The protein belongs to the ketol-acid reductoisomerase family. It depends on Mg(2+) as a cofactor.

It catalyses the reaction (2R)-2,3-dihydroxy-3-methylbutanoate + NADP(+) = (2S)-2-acetolactate + NADPH + H(+). The enzyme catalyses (2R,3R)-2,3-dihydroxy-3-methylpentanoate + NADP(+) = (S)-2-ethyl-2-hydroxy-3-oxobutanoate + NADPH + H(+). The protein operates within amino-acid biosynthesis; L-isoleucine biosynthesis; L-isoleucine from 2-oxobutanoate: step 2/4. It functions in the pathway amino-acid biosynthesis; L-valine biosynthesis; L-valine from pyruvate: step 2/4. In terms of biological role, involved in the biosynthesis of branched-chain amino acids (BCAA). Catalyzes an alkyl-migration followed by a ketol-acid reduction of (S)-2-acetolactate (S2AL) to yield (R)-2,3-dihydroxy-isovalerate. In the isomerase reaction, S2AL is rearranged via a Mg-dependent methyl migration to produce 3-hydroxy-3-methyl-2-ketobutyrate (HMKB). In the reductase reaction, this 2-ketoacid undergoes a metal-dependent reduction by NADPH to yield (R)-2,3-dihydroxy-isovalerate. This is Ketol-acid reductoisomerase (NADP(+)) from Saccharopolyspora erythraea (strain ATCC 11635 / DSM 40517 / JCM 4748 / NBRC 13426 / NCIMB 8594 / NRRL 2338).